The chain runs to 396 residues: Putative isochorismate synthase (396 aa).

Belongs to the isochorismate synthase family.

The enzyme catalyses chorismate = isochorismate. The protein operates within siderophore biosynthesis; amonabactin biosynthesis. Functionally, involved in the synthesis of amonabactin, a phenolate siderophore containing 2,3-dihydroxybenzoic acid (2,3-DHB). The protein is Putative isochorismate synthase (amoA) of Aeromonas hydrophila.